The primary structure comprises 313 residues: Leucine zipper protein 4 (313 aa).

The tract at residues 1–119 is interaction with DDX39B/UAP56; sequence MASFRKLTLS…PLIEQEKCSD (119 aa). Disordered stretches follow at residues 1 to 238 and 290 to 313; these read MASF…QGDL and QSGR…TITT. Residues 22 to 40 carry the UAP56-binding motif (UBM); required for proper nuclear localization motif; it reads KVNFLDMSLDDIIIYKELE. Basic and acidic residues predominate over residues 34–60; the sequence is IIYKELEGTNAEEEKNKRQNHSKKESP. The interval 51–80 is arg-rich; required for RNA-binding; the sequence is RQNHSKKESPSRQQSKAHRHRHRRGYSRCR. Over residues 65–77 the composition is skewed to basic residues; that stretch reads SKAHRHRHRRGYS. Positions 81-92 are enriched in basic and acidic residues; it reads SNSEEGNHDKKP. Positions 126–141 are enriched in polar residues; sequence EKNQGQSEGNQHQSEG. Over residues 142 to 168 the composition is skewed to basic and acidic residues; it reads NPDKSEESQGQPEENHHSERSRNHLER. Over residues 169 to 179 the composition is skewed to polar residues; it reads SLSQSDRSQGQ. The tract at residues 178–236 is RS-containing His-rich (RS-H); necessary for nuclear localization; sequence GQLKRHHPQYERSHGQYKRSHGQSERSHGHSERSHGHSERSHGHSERSHGHSKRSRSQG. The span at 199-226 shows a compositional bias: basic and acidic residues; the sequence is GQSERSHGHSERSHGHSERSHGHSERSH. A Phosphoserine modification is found at Ser234. The segment at 238-287 is leucine-zipper; required for RNA-binding and for its relocalization to the cytoplasm during cell division; sequence LVDTQSDLIATQRDLIATQKDLIATQRDLIATQRDLIVTQRDLVATERDL. The tract at residues 241–313 is interaction with NXF1; that stretch reads TQSDLIATQR…YSTGKNTITT (73 aa). Residues 304–313 are compositionally biased toward polar residues; the sequence is YSTGKNTITT.

Interacts with NXF1, NXF2, THOC1, THOC5, DDX39B/UAP56 and SRRT. In terms of tissue distribution, expressed specifically in testis. Also expressed in a wide variety of cancer types, but particularly high levels of expression observed in melanoma cells.

It is found in the nucleus. The protein localises to the cytoplasm. Functionally, export adapter involved in mRNA nuclear export in cancer cells. Binds and enhances the RNA-binding activity of the nuclear RNA export factor NXF1. Can restore mRNA export function in cells compromised by loss of mRNA export adapters. The sequence is that of Leucine zipper protein 4 (LUZP4) from Homo sapiens (Human).